We begin with the raw amino-acid sequence, 503 residues long: 2-isopropylmalate synthase (503 aa).

The Mn(2+) site is built by Asp1, His189, His191, and Asn225. Residues Asp1–Tyr254 form the Pyruvate carboxyltransferase domain. The interval Ser379–Gln503 is regulatory domain.

It belongs to the alpha-IPM synthase/homocitrate synthase family. LeuA type 1 subfamily. As to quaternary structure, homodimer. Mn(2+) serves as cofactor.

The protein localises to the cytoplasm. It catalyses the reaction 3-methyl-2-oxobutanoate + acetyl-CoA + H2O = (2S)-2-isopropylmalate + CoA + H(+). The protein operates within amino-acid biosynthesis; L-leucine biosynthesis; L-leucine from 3-methyl-2-oxobutanoate: step 1/4. In terms of biological role, catalyzes the condensation of the acetyl group of acetyl-CoA with 3-methyl-2-oxobutanoate (2-ketoisovalerate) to form 3-carboxy-3-hydroxy-4-methylpentanoate (2-isopropylmalate). This is 2-isopropylmalate synthase from Buchnera aphidicola subsp. Uroleucon ambrosiae.